The sequence spans 565 residues: Sulfite reductase [NADPH] hemoprotein beta-component (565 aa).

Residues C429, C435, C474, and C478 each coordinate [4Fe-4S] cluster. C478 contributes to the siroheme binding site.

This sequence belongs to the nitrite and sulfite reductase 4Fe-4S domain family. Alpha(8)-beta(8). The alpha component is a flavoprotein, the beta component is a hemoprotein. Siroheme serves as cofactor. [4Fe-4S] cluster is required as a cofactor.

The enzyme catalyses hydrogen sulfide + 3 NADP(+) + 3 H2O = sulfite + 3 NADPH + 4 H(+). The protein operates within sulfur metabolism; hydrogen sulfide biosynthesis; hydrogen sulfide from sulfite (NADPH route): step 1/1. Its function is as follows. Component of the sulfite reductase complex that catalyzes the 6-electron reduction of sulfite to sulfide. This is one of several activities required for the biosynthesis of L-cysteine from sulfate. The polypeptide is Sulfite reductase [NADPH] hemoprotein beta-component (Shewanella sp. (strain W3-18-1)).